Reading from the N-terminus, the 476-residue chain is Riboflavin transporter rft-2 (476 aa).

The chain crosses the membrane as a helical span at residues methionine 1–glycine 21. Residues threonine 22–asparagine 41 lie on the Cytoplasmic side of the membrane. Residues leucine 42–isoleucine 62 form a helical membrane-spanning segment. At leucine 63 to alanine 75 the chain is on the extracellular side. The helical transmembrane segment at proline 76–tryptophan 96 threads the bilayer. The Cytoplasmic segment spans residues serine 97 to serine 113. The helical transmembrane segment at leucine 114–alanine 134 threads the bilayer. Residues glutamine 135–tyrosine 140 are Extracellular-facing. A helical membrane pass occupies residues leucine 141–alanine 161. The Cytoplasmic segment spans residues glutamine 162–serine 185. The helical transmembrane segment at isoleucine 186–tyrosine 206 threads the bilayer. Residues arginine 207 to lysine 306 lie on the Extracellular side of the membrane. The tract at residues alanine 215–isoleucine 249 is disordered. The span at asparagine 218–leucine 232 shows a compositional bias: basic and acidic residues. Asparagine 233 carries an N-linked (GlcNAc...) asparagine glycan. A helical transmembrane segment spans residues phenylalanine 307–serine 327. At valine 328 to histidine 342 the chain is on the cytoplasmic side. The chain crosses the membrane as a helical span at residues phenylalanine 343–serine 363. Residues valine 364–serine 366 are Extracellular-facing. The helical transmembrane segment at isoleucine 367 to leucine 387 threads the bilayer. Over alanine 388 to asparagine 393 the chain is Cytoplasmic. A helical membrane pass occupies residues leucine 394–alanine 414. Residues glycine 415–arginine 437 lie on the Extracellular side of the membrane. The chain crosses the membrane as a helical span at residues leucine 438–proline 458. Residues leucine 459–serine 476 lie on the Cytoplasmic side of the membrane.

It belongs to the riboflavin transporter family. Expressed in intestine and pharynx.

The protein localises to the cell membrane. It catalyses the reaction riboflavin(in) = riboflavin(out). Its function is as follows. Riboflavin transporter. The polypeptide is Riboflavin transporter rft-2 (Caenorhabditis elegans).